The following is a 165-amino-acid chain: HTH-type transcriptional regulator IscR (165 aa).

In terms of domain architecture, HTH rrf2-type spans R2 to N131. Residues L28–K51 constitute a DNA-binding region (H-T-H motif). Residues C92, C98, and C104 each coordinate [2Fe-2S] cluster.

[2Fe-2S] cluster is required as a cofactor.

Functionally, regulates the transcription of several operons and genes involved in the biogenesis of Fe-S clusters and Fe-S-containing proteins. This is HTH-type transcriptional regulator IscR from Erwinia tasmaniensis (strain DSM 17950 / CFBP 7177 / CIP 109463 / NCPPB 4357 / Et1/99).